A 359-amino-acid polypeptide reads, in one-letter code: Quinolinate synthase (359 aa).

Iminosuccinate contacts are provided by His81 and Ser99. Cys144 is a binding site for [4Fe-4S] cluster. Residues 170–172 and Ser187 contribute to the iminosuccinate site; that span reads YVN. Cys229 is a [4Fe-4S] cluster binding site. Residues 255 to 257 and Thr272 each bind iminosuccinate; that span reads HPE. Cys315 serves as a coordination point for [4Fe-4S] cluster.

It belongs to the quinolinate synthase family. Type 2 subfamily. Requires [4Fe-4S] cluster as cofactor.

Its subcellular location is the cytoplasm. It catalyses the reaction iminosuccinate + dihydroxyacetone phosphate = quinolinate + phosphate + 2 H2O + H(+). It functions in the pathway cofactor biosynthesis; NAD(+) biosynthesis; quinolinate from iminoaspartate: step 1/1. Functionally, catalyzes the condensation of iminoaspartate with dihydroxyacetone phosphate to form quinolinate. The polypeptide is Quinolinate synthase (Sinorhizobium medicae (strain WSM419) (Ensifer medicae)).